Here is a 209-residue protein sequence, read N- to C-terminus: NADH-quinone oxidoreductase subunit C (209 aa).

This sequence belongs to the complex I 30 kDa subunit family. In terms of assembly, NDH-1 is composed of 14 different subunits. Subunits NuoB, C, D, E, F, and G constitute the peripheral sector of the complex.

It is found in the cell inner membrane. It carries out the reaction a quinone + NADH + 5 H(+)(in) = a quinol + NAD(+) + 4 H(+)(out). NDH-1 shuttles electrons from NADH, via FMN and iron-sulfur (Fe-S) centers, to quinones in the respiratory chain. The immediate electron acceptor for the enzyme in this species is believed to be ubiquinone. Couples the redox reaction to proton translocation (for every two electrons transferred, four hydrogen ions are translocated across the cytoplasmic membrane), and thus conserves the redox energy in a proton gradient. This chain is NADH-quinone oxidoreductase subunit C, found in Xanthobacter autotrophicus (strain ATCC BAA-1158 / Py2).